A 137-amino-acid chain; its full sequence is Large ribosomal subunit protein uL16 (137 aa).

Belongs to the universal ribosomal protein uL16 family. As to quaternary structure, part of the 50S ribosomal subunit.

Binds 23S rRNA and is also seen to make contacts with the A and possibly P site tRNAs. The polypeptide is Large ribosomal subunit protein uL16 (Ruegeria pomeroyi (strain ATCC 700808 / DSM 15171 / DSS-3) (Silicibacter pomeroyi)).